A 568-amino-acid chain; its full sequence is Zinc finger protein 768 (568 aa).

Over residues 1–16 the composition is skewed to basic and acidic residues; sequence MEREASSWGLESRDVH. Disordered stretches follow at residues 1–223, 228–247, and 264–287; these read MERE…SLGV, SFTQGFGEQPTGALPPFDMP, and LNLTGTLRGPGRRGGRARGGQGPR. Residues Ser-17, Ser-23, and Ser-27 each carry the phosphoserine modification. Thr-35 bears the Phosphothreonine mark. Residues Ser-36, Ser-65, Ser-72, Ser-79, Ser-86, Ser-93, Ser-100, Ser-107, Ser-114, Ser-121, Ser-128, Ser-135, and Ser-149 each carry the phosphoserine modification. Positions 62–80 are enriched in low complexity; sequence EPQSPEFEPQSPEFESQSP. The segment covering 110-122 has biased composition (polar residues); it reads SDPQSPEFESQSP. Phosphotyrosine is present on Tyr-152. The residue at position 154 (Ser-154) is a Phosphoserine. The segment covering 159–186 has biased composition (polar residues); it reads FESQSPGYESQSPGYEPQNSGDGVQNSE. Thr-189 carries the post-translational modification Phosphothreonine. Position 191 is a phosphoserine (Ser-191). The C2H2-type 1 zinc finger occupies 289-311; that stretch reads NICGICGKSFGRGSTLIQHQRIH. Position 312 is a phosphothreonine (Thr-312). Tyr-317 carries the phosphotyrosine modification. 4 C2H2-type zinc fingers span residues 317–339, 345–367, 373–395, and 401–423; these read YKCEVCSKAFSQSSDLIKHQRTH, YKCPRCGKAFADSSYLLRHQRTH, YKCPHCGKAFGDSSYLLRHQRTH, and YSCPECGKCYSQNSSLRSHQRVH. Residues Ser-323 and Ser-327 each carry the phosphoserine modification. At Thr-424 the chain carries Phosphothreonine. 5 C2H2-type zinc fingers span residues 429 to 451, 457 to 479, 485 to 507, 513 to 535, and 541 to 563; these read FSCGICGKSFSQRSALIPHARSH, FKCPECGKRFGQSSVLAIHARTH, YSCPDCGKTFNRSSTLIQHQRSH, YRCAVCGKGFCRSSTLLQHHRVH, and YKCDDCGKAFSQSSDLIRHQRTH. A Phosphoserine modification is found at Ser-470.

Belongs to the krueppel C2H2-type zinc-finger protein family. In terms of assembly, interacts (via zinc-finger domains) with TP53 (via N-terminus); interaction might be facilitated by TP53 oligomerization state. Interacts with ELP3. Post-translationally, may be phosphorylated at residue 'Ser-5' of the tandem heptapeptide repeats in the N-terminus. Phosphorylation might be increased upon RAS pathway activation and negatively regulate protein stability.

It is found in the nucleus. Its subcellular location is the chromosome. Functionally, binds to mammalian-wide interspersed repeat (MIRs) sequences in euchromatin and promoter regions of genes at the consensus sequence 5'-GCTGTGTG-[N20]-CCTCTCTG-3', consisting of two anchor regions connected by a linker region; the linker region probably does not contribute to the binding specificity. Required for cell homeostasis. May be involved in transcriptional regulation. This is Zinc finger protein 768 (Znf768) from Mus musculus (Mouse).